We begin with the raw amino-acid sequence, 316 residues long: HPr kinase/phosphorylase (316 aa).

Catalysis depends on residues His143 and Lys164. 158–165 provides a ligand contact to ATP; sequence GEAGSGKS. Ser165 contacts Mg(2+). Asp182 acts as the Proton acceptor; for phosphorylation activity. Proton donor; for dephosphorylation activity in catalysis. The interval 206–215 is important for the catalytic mechanism of both phosphorylation and dephosphorylation; it reads LEVRGLGVLN. Glu207 provides a ligand contact to Mg(2+). Arg251 is an active-site residue. Residues 272–277 form an important for the catalytic mechanism of dephosphorylation region; it reads PVMPGR.

Belongs to the HPrK/P family. In terms of assembly, homohexamer. The cofactor is Mg(2+).

The enzyme catalyses [HPr protein]-L-serine + ATP = [HPr protein]-O-phospho-L-serine + ADP + H(+). The catalysed reaction is [HPr protein]-O-phospho-L-serine + phosphate + H(+) = [HPr protein]-L-serine + diphosphate. Functionally, catalyzes the ATP- as well as the pyrophosphate-dependent phosphorylation of a specific serine residue in HPr, a phosphocarrier protein of the phosphoenolpyruvate-dependent sugar phosphotransferase system (PTS). HprK/P also catalyzes the pyrophosphate-producing, inorganic phosphate-dependent dephosphorylation (phosphorolysis) of seryl-phosphorylated HPr (P-Ser-HPr). This is HPr kinase/phosphorylase from Stenotrophomonas maltophilia (strain R551-3).